Reading from the N-terminus, the 505-residue chain is Histidine--tRNA ligase, mitochondrial (505 aa).

Residues 1–31 constitute a mitochondrion transit peptide; that stretch reads MPHLGPLRRRAWAALLGQLLRPPSTVCTRGC. Ser-66 bears the Phosphoserine mark. L-histidine is bound by residues 130 to 132, Arg-157, Gln-173, Asp-177, Arg-326, and 330 to 331; these read DLT and YY. Lys-443 is modified (N6-acetyllysine).

It belongs to the class-II aminoacyl-tRNA synthetase family. Homodimer.

It is found in the mitochondrion. The catalysed reaction is tRNA(His) + L-histidine + ATP = L-histidyl-tRNA(His) + AMP + diphosphate + H(+). Functionally, mitochondrial aminoacyl-tRNA synthetase that catalyzes the ATP-dependent ligation of histidine to the 3'-end of its cognate tRNA, via the formation of an aminoacyl-adenylate intermediate (His-AMP). The sequence is that of Histidine--tRNA ligase, mitochondrial (Hars2) from Mus musculus (Mouse).